The chain runs to 34 residues: WSTIVKLTICPTLKSMAKKCEGSIATMIKKKCDK.

Residues Cys10 and Cys32 are joined by a disulfide bond.

The protein belongs to the ectatomin family. Ectatomin-Et subfamily. Heterodimer of an A and a B chain; disulfide-linked. As to expression, expressed by the venom gland.

It localises to the secreted. The protein localises to the target cell membrane. Functionally, algogenic for animals, human and insects. At high concentrations (0.5-1 uM), it acts as a pore-forming protein that forms nonselective cation channels both in cell and artificial membranes. It is weakly selective for cation over anions channel conductance is identical in both directions. At lower concentrations (1-10 nM), this heterodimer inhibits cardiac L-type calcium currents in isolated rat cardiac ventricular myocytes. The polypeptide is Omega/M-ectatotoxin-Et1a subunit B (Ectatomma tuberculatum (Selva ant)).